The chain runs to 398 residues: 4-hydroxy-3-methylbut-2-enyl diphosphate reductase (398 aa).

[4Fe-4S] cluster is bound at residue Cys66. His96 is a binding site for (2E)-4-hydroxy-3-methylbut-2-enyl diphosphate. His96 is a dimethylallyl diphosphate binding site. His96 lines the isopentenyl diphosphate pocket. Cys157 provides a ligand contact to [4Fe-4S] cluster. His185 lines the (2E)-4-hydroxy-3-methylbut-2-enyl diphosphate pocket. His185 is a dimethylallyl diphosphate binding site. His185 is an isopentenyl diphosphate binding site. The Proton donor role is filled by Glu187. A (2E)-4-hydroxy-3-methylbut-2-enyl diphosphate-binding site is contributed by Thr250. Cys288 serves as a coordination point for [4Fe-4S] cluster. (2E)-4-hydroxy-3-methylbut-2-enyl diphosphate is bound by residues Ser317, Ser318, Asn319, and Ser379. Dimethylallyl diphosphate is bound by residues Ser317, Ser318, Asn319, and Ser379. The isopentenyl diphosphate site is built by Ser317, Ser318, Asn319, and Ser379.

It belongs to the IspH family. Requires [4Fe-4S] cluster as cofactor.

It catalyses the reaction isopentenyl diphosphate + 2 oxidized [2Fe-2S]-[ferredoxin] + H2O = (2E)-4-hydroxy-3-methylbut-2-enyl diphosphate + 2 reduced [2Fe-2S]-[ferredoxin] + 2 H(+). The enzyme catalyses dimethylallyl diphosphate + 2 oxidized [2Fe-2S]-[ferredoxin] + H2O = (2E)-4-hydroxy-3-methylbut-2-enyl diphosphate + 2 reduced [2Fe-2S]-[ferredoxin] + 2 H(+). It participates in isoprenoid biosynthesis; dimethylallyl diphosphate biosynthesis; dimethylallyl diphosphate from (2E)-4-hydroxy-3-methylbutenyl diphosphate: step 1/1. The protein operates within isoprenoid biosynthesis; isopentenyl diphosphate biosynthesis via DXP pathway; isopentenyl diphosphate from 1-deoxy-D-xylulose 5-phosphate: step 6/6. Catalyzes the conversion of 1-hydroxy-2-methyl-2-(E)-butenyl 4-diphosphate (HMBPP) into a mixture of isopentenyl diphosphate (IPP) and dimethylallyl diphosphate (DMAPP). Acts in the terminal step of the DOXP/MEP pathway for isoprenoid precursor biosynthesis. The sequence is that of 4-hydroxy-3-methylbut-2-enyl diphosphate reductase from Synechococcus sp. (strain ATCC 27144 / PCC 6301 / SAUG 1402/1) (Anacystis nidulans).